The chain runs to 431 residues: U-box domain-containing protein 20 (431 aa).

The region spanning 32-106 (TIPSQFQCPI…QGWCGSSLGG (75 aa)) is the U-box domain.

It carries out the reaction S-ubiquitinyl-[E2 ubiquitin-conjugating enzyme]-L-cysteine + [acceptor protein]-L-lysine = [E2 ubiquitin-conjugating enzyme]-L-cysteine + N(6)-ubiquitinyl-[acceptor protein]-L-lysine.. The protein operates within protein modification; protein ubiquitination. Functions as an E3 ubiquitin ligase. This is U-box domain-containing protein 20 (PUB20) from Arabidopsis thaliana (Mouse-ear cress).